A 179-amino-acid chain; its full sequence is Large ribosomal subunit protein uL6 (179 aa).

Belongs to the universal ribosomal protein uL6 family. Part of the 50S ribosomal subunit.

This protein binds to the 23S rRNA, and is important in its secondary structure. It is located near the subunit interface in the base of the L7/L12 stalk, and near the tRNA binding site of the peptidyltransferase center. This Halothermothrix orenii (strain H 168 / OCM 544 / DSM 9562) protein is Large ribosomal subunit protein uL6.